A 397-amino-acid chain; its full sequence is Sexual differentiation process protein isp7 (397 aa).

In terms of domain architecture, Fe2OG dioxygenase spans 255 to 353 (PTTSIRLLRY…RYTIPFFLQG (99 aa)).

This sequence belongs to the iron/ascorbate-dependent oxidoreductase family.

This chain is Sexual differentiation process protein isp7 (isp7), found in Schizosaccharomyces pombe (strain 972 / ATCC 24843) (Fission yeast).